The primary structure comprises 474 residues: PRAME family member 10 (474 aa).

One copy of the LRR 1; degenerate repeat lies at 97-124; that stretch reads RWKLQVLDLRDVDENFWTIWSGARVLSC. Residues 179–203 form an LRR 2; degenerate repeat; it reads HLCCSKVQNYSMPTSSFRNLLERIY. One copy of the LRR 3; degenerate repeat lies at 204-230; that stretch reads PDSIQELEVWKKCSLNKTGKFAPYLSQ. One copy of the LRR 4; degenerate repeat lies at 231-265; that stretch reads MSNLRELFLAFGYERELYVSVQWPCIPDLDSPFLC. LRR repeat units follow at residues 266 to 291, 292 to 323, 324 to 342, 348 to 375, and 376 to 400; these read LYYP…LRYL, KNPL…SQLK, ELRL…PLGV, AATL…ALSH, and CSQL…LLRH.

The protein belongs to the PRAME family.

The protein is PRAME family member 10 of Homo sapiens (Human).